Reading from the N-terminus, the 506-residue chain is MRGFVILDFGSQFTQLIARRLREMGFYSEIHSFEYPTEEIRKKNPYGIILSGGPNSVYEAGSPQRNVAELRNISPVMGVCYGMQLLTHQLGGKVTRAEHREYGLNYVTWSSPVQGVPERQKVWMSHGDVVEKAPEGFKIIANSDGHHPAAMQGPGVLAVQFHPEVAHTDHGMDLLKYFAQGMCKAPADWDAPHIKDILIKEAQDKVGPTDHVLVGLSGGVDSTVVATLLTKALGAERVHCVFVDNGLLRKNEYEAVLESYHRIGLNVRGVDASEEFLSALQGKSDPEDKRKTIGRVFIEVFDKSYDHKLPIKWLAQGTLYPDVIESVSSVGGSVTIKSHHNVGGLPEKMKLGLVEPVRELFKDEVRALGAQLGLPKEMLWRHPFPGPGLAIRVLGEVTKEKLQILKEADDVYISELRRRGLYEKIWQAFCVLLPVKTVGVQGDSRTYDHVLALRAVTSSDGMTADWYPFEFQFLREVSNLITNKVKGVNRVVYDVTSKPPGTIEWE.

The Glutamine amidotransferase type-1 domain maps to 3 to 188 (GFVILDFGSQ…AQGMCKAPAD (186 aa)). Cysteine 80 functions as the Nucleophile in the catalytic mechanism. Catalysis depends on residues histidine 162 and glutamate 164. The 193-residue stretch at 189-381 (WDAPHIKDIL…LGLPKEMLWR (193 aa)) folds into the GMPS ATP-PPase domain. 217–223 (SGGVDST) is a binding site for ATP.

As to quaternary structure, homodimer.

The enzyme catalyses XMP + L-glutamine + ATP + H2O = GMP + L-glutamate + AMP + diphosphate + 2 H(+). The protein operates within purine metabolism; GMP biosynthesis; GMP from XMP (L-Gln route): step 1/1. Its function is as follows. Catalyzes the synthesis of GMP from XMP. The sequence is that of GMP synthase [glutamine-hydrolyzing] from Bdellovibrio bacteriovorus (strain ATCC 15356 / DSM 50701 / NCIMB 9529 / HD100).